A 289-amino-acid chain; its full sequence is NAD kinase (289 aa).

Residue aspartate 68 is the Proton acceptor of the active site. NAD(+) contacts are provided by residues 68-69 (DG), lysine 73, 142-143 (ND), arginine 153, aspartate 172, 183-188 (TAYSLS), and glutamine 243.

This sequence belongs to the NAD kinase family. Requires a divalent metal cation as cofactor.

It is found in the cytoplasm. It carries out the reaction NAD(+) + ATP = ADP + NADP(+) + H(+). In terms of biological role, involved in the regulation of the intracellular balance of NAD and NADP, and is a key enzyme in the biosynthesis of NADP. Catalyzes specifically the phosphorylation on 2'-hydroxyl of the adenosine moiety of NAD to yield NADP. This chain is NAD kinase, found in Acetivibrio thermocellus (strain ATCC 27405 / DSM 1237 / JCM 9322 / NBRC 103400 / NCIMB 10682 / NRRL B-4536 / VPI 7372) (Clostridium thermocellum).